Reading from the N-terminus, the 79-residue chain is Probable [Fe-S]-dependent transcriptional repressor (79 aa).

4 residues coordinate iron-sulfur cluster: Cys56, Cys61, Cys64, and Cys71.

This sequence belongs to the FeoC family.

In terms of biological role, may function as a transcriptional regulator that controls feoABC expression. This chain is Probable [Fe-S]-dependent transcriptional repressor, found in Klebsiella pneumoniae subsp. pneumoniae (strain ATCC 700721 / MGH 78578).